The following is an 801-amino-acid chain: Zinc finger Y-chromosomal protein (801 aa).

Phosphoserine is present on Ser270. Residues Tyr421 to His443 form a C2H2-type 1 zinc finger. Residues Tyr452 to His474 form a C2H2-type 2; atypical zinc finger. 11 C2H2-type zinc fingers span residues Ile484–His506, His515–His538, His544–His566, Tyr572–His595, Phe601–His623, His629–His652, His658–His680, His686–His709, Phe715–His737, Tyr743–His766, and His772–His795.

The protein belongs to the krueppel C2H2-type zinc-finger protein family. ZFX/ZFY subfamily.

Its subcellular location is the nucleus. In terms of biological role, probable transcriptional activator. Binds to the consensus sequence 5'-AGGCCY-3'. In Homo sapiens (Human), this protein is Zinc finger Y-chromosomal protein (ZFY).